Here is a 263-residue protein sequence, read N- to C-terminus: Ribosomal RNA small subunit methyltransferase A (263 aa).

Positions 13, 15, 40, 61, 85, and 105 each coordinate S-adenosyl-L-methionine.

The protein belongs to the class I-like SAM-binding methyltransferase superfamily. rRNA adenine N(6)-methyltransferase family. RsmA subfamily.

The protein resides in the cytoplasm. The catalysed reaction is adenosine(1518)/adenosine(1519) in 16S rRNA + 4 S-adenosyl-L-methionine = N(6)-dimethyladenosine(1518)/N(6)-dimethyladenosine(1519) in 16S rRNA + 4 S-adenosyl-L-homocysteine + 4 H(+). Specifically dimethylates two adjacent adenosines (A1518 and A1519) in the loop of a conserved hairpin near the 3'-end of 16S rRNA in the 30S particle. May play a critical role in biogenesis of 30S subunits. This is Ribosomal RNA small subunit methyltransferase A from Mycoplasma pneumoniae (strain ATCC 29342 / M129 / Subtype 1) (Mycoplasmoides pneumoniae).